A 178-amino-acid polypeptide reads, in one-letter code: Ribosome maturation factor RimM (178 aa).

The PRC barrel domain maps to 104–177 (SDEYYFYEVI…KIVVKLPEWL (74 aa)).

This sequence belongs to the RimM family. As to quaternary structure, binds ribosomal protein uS19.

Its subcellular location is the cytoplasm. In terms of biological role, an accessory protein needed during the final step in the assembly of 30S ribosomal subunit, possibly for assembly of the head region. Essential for efficient processing of 16S rRNA. May be needed both before and after RbfA during the maturation of 16S rRNA. It has affinity for free ribosomal 30S subunits but not for 70S ribosomes. In Thermosipho melanesiensis (strain DSM 12029 / CIP 104789 / BI429), this protein is Ribosome maturation factor RimM.